We begin with the raw amino-acid sequence, 305 residues long: Tyrosine recombinase XerC (305 aa).

One can recognise a Core-binding (CB) domain in the interval 4–95 (ISIQELIKQW…TVKNFYKFLE (92 aa)). A Tyr recombinase domain is found at 116 to 298 (LLPKALSVDD…SIKHLEAVYN (183 aa)). Residues Arg159, Lys182, His250, Arg253, and His276 contribute to the active site. Tyr285 serves as the catalytic O-(3'-phospho-DNA)-tyrosine intermediate.

This sequence belongs to the 'phage' integrase family. XerC subfamily. Forms a cyclic heterotetrameric complex composed of two molecules of XerC and two molecules of XerD.

Its subcellular location is the cytoplasm. Site-specific tyrosine recombinase, which acts by catalyzing the cutting and rejoining of the recombining DNA molecules. The XerC-XerD complex is essential to convert dimers of the bacterial chromosome into monomers to permit their segregation at cell division. It also contributes to the segregational stability of plasmids. The protein is Tyrosine recombinase XerC of Rickettsia typhi (strain ATCC VR-144 / Wilmington).